We begin with the raw amino-acid sequence, 281 residues long: Probable thioesterase gloN (281 aa).

The disordered stretch occupies residues 207 to 233; that stretch reads LDDGSNNSRDLNETSPTETSNDSETQA. A compositionally biased stretch (polar residues) spans 210–232; sequence GSNNSRDLNETSPTETSNDSETQ.

It belongs to the AMT4 thioesterase family.

The protein operates within mycotoxin biosynthesis. Probable thioesterase; part of the gene cluster that mediates the biosynthesis of pneumocandins, lipohexapeptides of the echinocandin family that prevent fungal cell wall formation by non-competitive inhibition of beta-1,3-glucan synthase. The 10,12-dimethylmyristoyl side chain is synthesized by the reducing polyketide synthase gloL/GLPKS4. The thioesterase gloN/GLHYD exclusively interacts with gloL/GLPKS4 to maintain turnover of the polyketide side chain. The 10R,12S-dimethylmyristic acid is then transferred to the first thiolation domain of the nonribosomal peptide synthetase gloA/GLNRPS4 by the acyl-AMP ligase gloD/GLligase, followed by its acylation to L-ornithine to trigger elongation of the cyclic hexapeptide. L-ornithine, 4R-hydroxyl-L-proline (generated from L-proline by the dioxygenase gloF/GLOXY2), 3S-hydroxyl-L-homotyrosine (generated by gloG/GLHtyB, gloH/GLHtyA, gloI/GLHtyC, gloJ/GLHtyD and hydroxylated at C-3 by the dioxygenase gloM/GLOXY1), 3R-hydroxyl-L-glutamine (generated from L-glutamine probably by the dioxygenase gloE/GLOXY3) and 3S-hydroxyl-L-proline (generated from L-proline by the dioxygenase gloF/GLOXY2 to yield pneumocandin B0), or 3S-hydroxyl-4S-methyl-L-proline (generated from L-leucine by the dioxygenase gloC/GLOXY4 to yield pneumocandin A0) are sequentially added to the growing chain. The last C domain of gloA/GLNRPS4 is proposed to be responsible for cyclization by condensation to form the peptide bond between L-ornithine and 3S-hydroxyl-4S-methyl-L-proline (for pneumocandin A0) or 3S-hydroxyl-L-proline (for pneumocandin B0). Finally, the subsequent C-4 hydroxylation of 3S-hydroxyl-L-homotyrosine and L-ornithine dihydroxylation at C-4 and C-5 are performed by the cytochrome P450 monooxygenases gloP/GLP450-1 and gloO/GLP450-2, respectively. This is Probable thioesterase gloN from Glarea lozoyensis (strain ATCC 20868 / MF5171).